The primary structure comprises 447 residues: Na(+)-translocating NADH-quinone reductase subunit A (447 aa).

The protein belongs to the NqrA family. As to quaternary structure, composed of six subunits; NqrA, NqrB, NqrC, NqrD, NqrE and NqrF.

The enzyme catalyses a ubiquinone + n Na(+)(in) + NADH + H(+) = a ubiquinol + n Na(+)(out) + NAD(+). Functionally, NQR complex catalyzes the reduction of ubiquinone-1 to ubiquinol by two successive reactions, coupled with the transport of Na(+) ions from the cytoplasm to the periplasm. NqrA to NqrE are probably involved in the second step, the conversion of ubisemiquinone to ubiquinol. The polypeptide is Na(+)-translocating NADH-quinone reductase subunit A (Neisseria gonorrhoeae (strain NCCP11945)).